Here is a 98-residue protein sequence, read N- to C-terminus: NADH-ubiquinone oxidoreductase chain 4L (98 aa).

A run of 3 helical transmembrane segments spans residues 1–21 (MSLVHMNVIVAFTLSLVGLLM), 29–49 (ALLCMEGMMLSLFVLAALTIL), and 61–81 (IILLVFAACEAAIGLALLVTI).

Belongs to the complex I subunit 4L family. Core subunit of respiratory chain NADH dehydrogenase (Complex I) which is composed of 45 different subunits.

It localises to the mitochondrion inner membrane. The enzyme catalyses a ubiquinone + NADH + 5 H(+)(in) = a ubiquinol + NAD(+) + 4 H(+)(out). Functionally, core subunit of the mitochondrial membrane respiratory chain NADH dehydrogenase (Complex I) which catalyzes electron transfer from NADH through the respiratory chain, using ubiquinone as an electron acceptor. Part of the enzyme membrane arm which is embedded in the lipid bilayer and involved in proton translocation. This chain is NADH-ubiquinone oxidoreductase chain 4L (MT-ND4L), found in Ziphius cavirostris (Cuvier's beaked whale).